A 156-amino-acid polypeptide reads, in one-letter code: Arginine repressor (156 aa).

This sequence belongs to the ArgR family.

It localises to the cytoplasm. It functions in the pathway amino-acid biosynthesis; L-arginine biosynthesis [regulation]. Functionally, regulates arginine biosynthesis genes. This is Arginine repressor from Citrobacter koseri (strain ATCC BAA-895 / CDC 4225-83 / SGSC4696).